Consider the following 477-residue polypeptide: Sporulation-specific protein 77 (477 aa).

The tract at residues 428-452 is disordered; the sequence is SQQRESSNAESESITSSTEEDEEGL. The segment covering 432–444 has biased composition (low complexity); the sequence is ESSNAESESITSS.

The protein localises to the cytoplasm. Its function is as follows. Required for spore wall assembly and ascus formation. The chain is Sporulation-specific protein 77 (SPO77) from Saccharomyces cerevisiae (strain ATCC 204508 / S288c) (Baker's yeast).